A 521-amino-acid chain; its full sequence is Insulinoma-associated protein 1 (521 aa).

Positions 1 to 12 (MPRGFLVKRSKK) are enriched in basic residues. The segment at 1 to 20 (MPRGFLVKRSKKSTPVSYRV) is SNAG domain. Disordered stretches follow at residues 1-59 (MPRG…PPAL), 76-107 (GPPP…PTRP), and 180-230 (AEAA…KPKA). Residues 2-7 (PRGFLV) are required and sufficient for interaction with KDM1A. The tract at residues 43-56 (PPVPSPGPLPPPPP) is necessary for interaction with CCND1. Composition is skewed to pro residues over residues 43–58 (PPVP…PPPA) and 76–85 (GPPPPPPPGP). Residues 209–223 (AAVATEPPAKAAKAP) show a composition bias toward low complexity. Residues 272-292 (FICQLCKEEYADPFALAQHKC) form a C2H2-type 1; atypical zinc finger. The C2H2-type 2 zinc-finger motif lies at 300–322 (YRCPECAKVFSCPANLASHRRWH). Residues 320 to 369 (RWHKPRPVPAAARAPEPEAATRAEAREAAGGGSSDRDTPSPGGVSESGSE) are disordered. Basic and acidic residues predominate over residues 334–346 (PEPEAATRAEARE). Residues 373–395 (YECHHCAKKFRRQAYLRKHLLAH) form a C2H2-type 3 zinc finger. The segment at 398–419 (ALQAKGAPPPPPPPPPPAEDIL) is disordered. The segment covering 404 to 415 (APPPPPPPPPPA) has biased composition (pro residues). 2 C2H2-type zinc fingers span residues 452-475 (HLCP…RLLH) and 480-503 (FPCK…NKCH).

Belongs to the INSM1 family. As to quaternary structure, interacts (via the N-terminal region) with CCND1 (via cyclin N-terminal domain); the interaction competes with the binding of CCND1 to CDK4 during cell cycle progression and increases its transcriptional repressor activity. Interacts with HDAC3; the interaction increases its transcriptional repressor activity. Interacts (via the SNAG domain) with HDAC1. Interacts (via the SNAG domain) with HDAC2. Interacts (via the SNAG domain) with KDM1A. Interacts (via the SNAG domain) with RCOR1. Interacts with SORBS1. In terms of tissue distribution, expressed in adrenal gland. Expressed in the dentate gyrus of the hippocampus and the wall of the lateral ventricle. Expressed in pancreatic and intestinal endocrine cells.

The protein localises to the nucleus. Functionally, sequence-specific DNA-binding transcriptional regulator that plays a key role in neurogenesis and neuroendocrine cell differentiation during embryonic and/or fetal development. Binds to the consensus sequence 5'-[TG][TC][TC][TT][GA]GGG[CG]A-3' in target promoters. Acts as a transcriptional repressor of NEUROD1 and INS expression via its interaction with cyclin CCND1 in a cell cycle-independent manner. Negatively regulates skeletal muscle-specific gene expression in endocrine cells of the pituitary by inhibiting the Notch signaling pathway. Represses target gene transcription by recruiting chromatin-modifying factors, such as HDAC1, HDAC2, HDAC3, KDM1A and RCOR1 histone deacetylases. Binds to its own promoter, suggesting autoregulation as a self-control feedback mechanism. Competes with histone H3 for the same binding site on the histone demethylase complex formed by KDM1A and RCOR1, and thereby inhibits demethylation of histone H3 at 'Lys-4'. Promotes the generation and expansion of neuronal basal progenitor cells in the developing neocortex. Involved in the differentiation of endocrine cells of the developing anterior pituitary gland, of the pancreas and intestine, and of sympatho-adrenal cells in the peripheral nervous system. Promotes cell cycle signaling arrest and inhibition of cellular proliferation. This chain is Insulinoma-associated protein 1 (Insm1), found in Mus musculus (Mouse).